The primary structure comprises 160 residues: NADH-quinone oxidoreductase subunit I (160 aa).

2 4Fe-4S ferredoxin-type domains span residues 51 to 81 and 91 to 120; these read LRRY…IEAA and VRYD…EGPN. [4Fe-4S] cluster-binding residues include C61, C64, C67, C71, C100, C103, C106, and C110.

Belongs to the complex I 23 kDa subunit family. In terms of assembly, NDH-1 is composed of 14 different subunits. Subunits NuoA, H, J, K, L, M, N constitute the membrane sector of the complex. It depends on [4Fe-4S] cluster as a cofactor.

It localises to the cell inner membrane. The enzyme catalyses a quinone + NADH + 5 H(+)(in) = a quinol + NAD(+) + 4 H(+)(out). Its function is as follows. NDH-1 shuttles electrons from NADH, via FMN and iron-sulfur (Fe-S) centers, to quinones in the respiratory chain. The immediate electron acceptor for the enzyme in this species is believed to be ubiquinone. Couples the redox reaction to proton translocation (for every two electrons transferred, four hydrogen ions are translocated across the cytoplasmic membrane), and thus conserves the redox energy in a proton gradient. The sequence is that of NADH-quinone oxidoreductase subunit I from Anaplasma marginale (strain St. Maries).